Here is a 129-residue protein sequence, read N- to C-terminus: MGCCGCSGGCGSGCGGCGSGCGGCGSSCCVPICCCKPVCCCVPACSCTSCGSCGGSKGCCGSCGGSKGGCGSCGGSKGGCGSCGCSQCSCCKPCYCSSGCGSSCCQSSCCKPCCSQASCCVPICCQCKI.

A run of 6 repeats spans residues 28–31 (CCVP), 34–37 (CCKP), 40–43 (CCVP), 90–93 (CCKP), 109–112 (CCKP), and 119–122 (CCVP). A 6 X 4 AA repeats of C-C-X-P region spans residues 28-112 (CCVPICCCKP…SCCQSSCCKP (85 aa)).

It belongs to the KRTAP type 5 family. Interacts with hair keratins. Expressed in hair root and not in skin. Expressed also in liver and skeletal muscle.

In terms of biological role, in the hair cortex, hair keratin intermediate filaments are embedded in an interfilamentous matrix, consisting of hair keratin-associated protein (KRTAP), which are essential for the formation of a rigid and resistant hair shaft through their extensive disulfide bond cross-linking with abundant cysteine residues of hair keratins. The matrix proteins include the high-sulfur and high-glycine-tyrosine keratins. The chain is Keratin-associated protein 5-6 (KRTAP5-6) from Homo sapiens (Human).